The sequence spans 556 residues: 2-succinyl-5-enolpyruvyl-6-hydroxy-3-cyclohexene-1-carboxylate synthase (556 aa).

Belongs to the TPP enzyme family. MenD subfamily. As to quaternary structure, homodimer. It depends on Mg(2+) as a cofactor. Mn(2+) serves as cofactor. Thiamine diphosphate is required as a cofactor.

It catalyses the reaction isochorismate + 2-oxoglutarate + H(+) = 5-enolpyruvoyl-6-hydroxy-2-succinyl-cyclohex-3-ene-1-carboxylate + CO2. Its pathway is quinol/quinone metabolism; 1,4-dihydroxy-2-naphthoate biosynthesis; 1,4-dihydroxy-2-naphthoate from chorismate: step 2/7. It functions in the pathway quinol/quinone metabolism; menaquinone biosynthesis. Catalyzes the thiamine diphosphate-dependent decarboxylation of 2-oxoglutarate and the subsequent addition of the resulting succinic semialdehyde-thiamine pyrophosphate anion to isochorismate to yield 2-succinyl-5-enolpyruvyl-6-hydroxy-3-cyclohexene-1-carboxylate (SEPHCHC). The polypeptide is 2-succinyl-5-enolpyruvyl-6-hydroxy-3-cyclohexene-1-carboxylate synthase (Escherichia fergusonii (strain ATCC 35469 / DSM 13698 / CCUG 18766 / IAM 14443 / JCM 21226 / LMG 7866 / NBRC 102419 / NCTC 12128 / CDC 0568-73)).